We begin with the raw amino-acid sequence, 220 residues long: Iron-sulfur cluster repair protein YtfE (220 aa).

Belongs to the RIC family. YtfE subfamily. As to quaternary structure, homodimer.

It is found in the cytoplasm. Functionally, di-iron-containing protein involved in the repair of iron-sulfur clusters damaged by oxidative and nitrosative stress conditions. The protein is Iron-sulfur cluster repair protein YtfE of Shigella boydii serotype 18 (strain CDC 3083-94 / BS512).